The following is a 911-amino-acid chain: Band 3 anion transport protein (911 aa).

Met-1 carries the post-translational modification N-acetylmethionine. Over residues 1-26 the composition is skewed to acidic residues; the sequence is MEELQDDYEDMMEENLEQEEYEDPDI. Positions 1-40 are disordered; sequence MEELQDDYEDMMEENLEQEEYEDPDIPESQMEEPAAHDTE. Residues 1–403 lie on the Cytoplasmic side of the membrane; sequence MEELQDDYED…LSDITDAFSP (403 aa). A phosphotyrosine mark is found at Tyr-8, Tyr-21, and Tyr-46. Residues 13 to 31 form a (Microbial infection) Interaction with P.falciparum (isolate K1) FBPA region; sequence EENLEQEEYEDPDIPESQM. The globular stretch occupies residues 55 to 290; sequence HKVYVELQEL…LGRAAATLMS (236 aa). Positions 176-185 are interaction with ANK1; it reads AVLTRSGDPS. Phosphoserine is present on residues Ser-185 and Ser-350. The dimerization arm stretch occupies residues 304-357; it reads RGELLHSLEGFLDCSLVLPPTDAPSEQALLSLVPVQRELLRRRYQSSPAKPDSS. A Phosphotyrosine modification is found at Tyr-359. Residues 404-427 form a helical membrane-spanning segment; the sequence is QVLAAVIFIYFAALSPAITFGGLL. Over 428–435 the chain is Extracellular; that stretch reads GEKTRNQM. Residues 436–456 form a helical membrane-spanning segment; sequence GVSELLISTAVQGILFALLGA. Topologically, residues 457 to 459 are cytoplasmic; that stretch reads QPL. Residues 460 to 476 traverse the membrane as a discontinuously helical segment; it reads LVVGFSGPLLVFEEAFF. Over 477 to 485 the chain is Extracellular; that stretch reads SFCETNGLE. A helical transmembrane segment spans residues 486–506; sequence YIVGRVWIGFWLILLVVLVVA. Residues 507–518 are Cytoplasmic-facing; it reads FEGSFLVRFISR. Residues 519 to 541 traverse the membrane as a helical segment; that stretch reads YTQEIFSFLISLIFIYETFSKLI. The Extracellular segment spans residues 542 to 570; sequence KIFQDHPLQKTYNYNVLMVPKPQGPLPNT. Residues 559-630 form an involved in anion transport region; it reads MVPKPQGPLP…DFFIQDTYTQ (72 aa). The helical transmembrane segment at 571-591 threads the bilayer; that stretch reads ALLSLVLMAGTFFFAMMLRKF. The Cytoplasmic segment spans residues 592–602; that stretch reads KNSSYFPGKLR. A helical transmembrane segment spans residues 603–623; it reads RVIGDFGVPISILIMVLVDFF. Residues 624-663 are Extracellular-facing; the sequence is IQDTYTQKLSVPDGFKVSNSSARGWVIHPLGLRSEFPIWM. The N-linked (GlcNAc...) (complex) asparagine glycan is linked to Asn-642. Residues 664–684 form a helical membrane-spanning segment; it reads MFASALPALLVFILIFLESQI. Residues 685 to 700 are Cytoplasmic-facing; the sequence is TTLIVSKPERKMVKGS. Residues 701-719 traverse the membrane as a helical segment; the sequence is GFHLDLLLVVGMGGVAALF. A discontinuously helical membrane pass occupies residues 720–737; it reads GMPWLSATTVRSVTHANA. Positions 720 to 761 are (Microbial infection) 5ABC region; interaction with P.falciparum (isolate 3D7) MSP9; sequence GMPWLSATTVRSVTHANALTVMGKASTPGAAAQIQEVKEQRI. The Cytoplasmic segment spans residues 738-760; that stretch reads LTVMGKASTPGAAAQIQEVKEQR. The next 2 membrane-spanning stretches (helical) occupy residues 761–781 and 782–800; these read ISGL…PILS and RIPL…VTSL. Topologically, residues 801-838 are cytoplasmic; the sequence is SGIQLFDRILLLFKPPKYHPDVPYVKRVKTWRMHLFTG. The segment at residues 839–869 is an intramembrane region (discontinuously helical); the sequence is IQIICLAVLWVVKSTPASLALPFVLILTVPL. Cys-843 is lipidated: S-palmitoyl cysteine. Residues 870-911 are Cytoplasmic-facing; it reads RRVLLPLIFRNVELQCLDADDAKATFDEEEGRDEYDEVAMPV. A Phosphotyrosine modification is found at Tyr-904.

The protein belongs to the anion exchanger (TC 2.A.31) family. A dimer in solution, but in its membrane environment, it exists primarily as a mixture of dimers and tetramers and spans the membrane asymmetrically. Component of the ankyrin-1 complex in the erythrocyte, composed of ANK1, RHCE, RHAG, SLC4A1, EPB42, GYPA, GYPB and AQP1. Interacts with STOM; this interaction positively regulates SLC4A1 activity. Interacts with GYPA; a GYPA monomer is bound at each end of the SLC4A1 dimer forming a heterotetramer. Three SLC4A1 dimers (Band 3-I, Band 3-II and Band 3-III) participates in the ankyrin-1 complex. Interacts (via the cytoplasmic domain) with EPB42; this interaction is mediated by the SLC4A1 Band 3-I dimer. Interacts (via the cytoplasmic domain) directly with ANK1; this interaction is mediated by the SLC4A1 Band 3-II and Band 3-III dimers. As to quaternary structure, interacts with TMEM139. In terms of assembly, (Microbial infection) Interacts (via N-terminus) with P.falciparum (isolate K1) aldolase FBPA; the interaction inhibits FBPA catalytic activity. (Microbial infection) Interacts (via the 5ABC region) with P.falciparum (isolate 3D7) MSP9/ABRA (via N-terminus). As to quaternary structure, (Microbial infection) Interacts (via the 5ABC region) with P.falciparum (isolate 3D7) MSP1 p42 subunit. Phosphorylated on Tyr-8 and Tyr-21 most likely by SYK. PP1-resistant phosphorylation that precedes Tyr-359 and Tyr-904 phosphorylation. In terms of processing, phosphorylated on Tyr-359 and Tyr-904 most likely by LYN. PP1-inhibited phosphorylation that follows Tyr-8 and Tyr-21 phosphorylation. Post-translationally, N-glycosylated. In terms of tissue distribution, detected in erythrocytes (at protein level). Expressed in kidney (at protein level).

It localises to the cell membrane. Its subcellular location is the basolateral cell membrane. The enzyme catalyses hydrogencarbonate(in) + chloride(out) = hydrogencarbonate(out) + chloride(in). With respect to regulation, phenyl isothiocyanate inhibits anion transport in vitro. Functionally, functions both as a transporter that mediates electroneutral anion exchange across the cell membrane and as a structural protein. Component of the ankyrin-1 complex of the erythrocyte membrane; required for normal flexibility and stability of the erythrocyte membrane and for normal erythrocyte shape via the interactions of its cytoplasmic domain with cytoskeletal proteins, glycolytic enzymes, and hemoglobin. Functions as a transporter that mediates the 1:1 exchange of inorganic anions across the erythrocyte membrane. Mediates chloride-bicarbonate exchange in the kidney, and is required for normal acidification of the urine. In terms of biological role, (Microbial infection) Acts as a receptor for P.falciparum (isolate 3D7) MSP9 and thus, facilitates merozoite invasion of erythrocytes. Acts as a receptor for P.falciparum (isolate 3D7) MSP1 and thus, facilitates merozoite invasion of erythrocytes. This Homo sapiens (Human) protein is Band 3 anion transport protein.